A 423-amino-acid polypeptide reads, in one-letter code: G protein-activated inward rectifier potassium channel 2 (423 aa).

Residues 1–89 (MAKLTESMTN…IFTTLVDLKW (89 aa)) are Cytoplasmic-facing. Phosphoserine occurs at positions 16 and 23. A helical transmembrane segment spans residues 90 to 114 (RFNLLIFVMVYTVTWLFFGMIWWLI). Over 115 to 138 (AYIRGDMDHIEDPSWTPCVTNLNG) the chain is Extracellular. The helical; Pore-forming intramembrane region spans 139 to 150 (FVSAFLFSIETE). The pore-forming intramembrane region spans 151–157 (TTIGYGY). Residues 152–157 (TIGYGY) carry the Selectivity filter motif. Residues 158–166 (RVITDKCPE) are Extracellular-facing. The chain crosses the membrane as a helical span at residues 167 to 188 (GIILLLIQSVLGSIVNAFMVGC). At 189-423 (MFVKISQPKK…VANLENESKV (235 aa)) the chain is on the cytoplasmic side. The interval 390–423 (NQHAELETEEEEKNLEEQTERNGDVANLENESKV) is disordered. A PDZ-binding motif is present at residues 420-423 (ESKV).

It belongs to the inward rectifier-type potassium channel (TC 1.A.2.1) family. KCNJ6 subfamily. Associates with KCNJ3/GIRK1 or KCNJ5/GRIK4 to form a G-protein-activated heteromultimer pore-forming unit. The resulting inward current is much larger. Interacts (via PDZ-binding motif) with SNX27 (via PDZ domain); the interaction is required when endocytosed to prevent degradation in lysosomes and promote recycling to the plasma membrane. In terms of tissue distribution, most abundant in cerebellum, and to a lesser degree in islets and exocrine pancreas.

The protein resides in the membrane. It catalyses the reaction K(+)(in) = K(+)(out). Its activity is regulated as follows. Activated by phosphatidylinositol 4,5 biphosphate (PtdIns(4,5)P2). Its function is as follows. Inward rectifier potassium channels are characterized by a greater tendency to allow potassium to flow into the cell rather than out of it. Their voltage dependence is regulated by the concentration of extracellular potassium; as external potassium is raised, the voltage range of the channel opening shifts to more positive voltages. The inward rectification is mainly due to the blockage of outward current by internal magnesium. This potassium channel may be involved in the regulation of insulin secretion by glucose and/or neurotransmitters acting through G-protein-coupled receptors. The protein is G protein-activated inward rectifier potassium channel 2 (KCNJ6) of Homo sapiens (Human).